We begin with the raw amino-acid sequence, 296 residues long: GTPase Era (296 aa).

The 168-residue stretch at 3 to 170 folds into the Era-type G domain; that stretch reads KSGFVTIIGR…IELMVKHLNE (168 aa). Residues 11–18 form a G1 region; it reads GRPNVGKS. GTP is bound at residue 11-18; sequence GRPNVGKS. The segment at 37–41 is G2; that stretch reads QTTRN. The G3 stretch occupies residues 58-61; it reads DTPG. GTP-binding positions include 58–62 and 120–123; these read DTPGM and NKID. The G4 stretch occupies residues 120–123; it reads NKID. Residues 149–151 form a G5 region; sequence ISA. Residues 201–277 form the KH type-2 domain; the sequence is LSQEVPHGIA…NMKIWVKVKK (77 aa).

The protein belongs to the TRAFAC class TrmE-Era-EngA-EngB-Septin-like GTPase superfamily. Era GTPase family. In terms of assembly, monomer.

The protein resides in the cytoplasm. It localises to the cell membrane. Functionally, an essential GTPase that binds both GDP and GTP, with rapid nucleotide exchange. Plays a role in 16S rRNA processing and 30S ribosomal subunit biogenesis and possibly also in cell cycle regulation and energy metabolism. This chain is GTPase Era, found in Clostridium acetobutylicum (strain ATCC 824 / DSM 792 / JCM 1419 / IAM 19013 / LMG 5710 / NBRC 13948 / NRRL B-527 / VKM B-1787 / 2291 / W).